Consider the following 1104-residue polypeptide: MERSPGEGPSPSPMDQPSAPSDPTDQPPAAHAKPDPGSGGQPAGPGAAGEALAVLTSFGRRLLVLIPVYLAGAVGLSVGFVLFGLALYLGWRRVRDEKERSLRAARQLLDDEEQLTAKTLYMSHRELPAWVSFPDVEKAEWLNKIVAQVWPFLGQYMEKLLAETVAPAVRGSNPHLQTFTFTRVELGEKPLRIIGVKVHPGQRKEQILLDLNISYVGDVQIDVEVKKYFCKAGVKGMQLHGVLRVILEPLIGDLPFVGAVSMFFIRRPTLDINWTGMTNLLDIPGLSSLSDTMIMDSIAAFLVLPNRLLVPLVPDLQDVAQLRSPLPRGIIRIHLLAARGLSSKDKYVKGLIEGKSDPYALVRLGTQTFCSRVIDEELNPQWGETYEVMVHEVPGQEIEVEVFDKDPDKDDFLGRMKLDVGKVLQASVLDDWFPLQGGQGQVHLRLEWLSLLSDAEKLEQVLQWNWGVSSRPDPPSAAILVVYLDRAQDLPLKKGNKEPNPMVQLSIQDVTQESKAVYSTNCPVWEEAFRFFLQDPQSQELDVQVKDDSRALTLGALTLPLARLLTAPELILDQWFQLSSSGPNSRLYMKLVMRILYLDSSEICFPTVPGCPGAWDVDSENPQRGSSVDAPPRPCHTTPDSQFGTEHVLRIHVLEAQDLIAKDRFLGGLVKGKSDPYVKLKLAGRSFRSHVVREDLNPRWNEVFEVIVTSVPGQELEVEVFDKDLDKDDFLGRCKVRLTTVLNSGFLDEWLTLEDVPSGRLHLRLERLTPRPTAAELEEVLQVNSLIQTQKSAELAAALLSIYMERAEDLPLRKGTKHLSPYATLTVGDSSHKTKTISQTSAPVWDESASFLIRKPHTESLELQVRGEGTGVLGSLSLPLSELLVADQLCLDRWFTLSSGQGQVLLRAQLGILVSQHSGVEAHSHSYSHSSSSLSEEPELSGGPPHITSSAPELRQRLTHVDSPLEAPAGPLGQVKLTLWYYSEERKLVSIVHGCRSLRQNGRDPPDPYVSLLLLPDKNRGTKRRTSQKKRTLSPEFNERFEWELPLDEAQRRKLDVSVKSNSSFMSRERELLGKVQLDLAETDLSQGVARWYDLMDNKDKGSS.

Met-1 is subject to N-acetylmethionine. At 1–38 the chain is on the cytoplasmic side; the sequence is MERSPGEGPSPSPMDQPSAPSDPTDQPPAAHAKPDPGS. The interval 1–48 is disordered; the sequence is MERSPGEGPSPSPMDQPSAPSDPTDQPPAAHAKPDPGSGGQPAGPGAA. Positions 37 to 47 are enriched in gly residues; the sequence is GSGGQPAGPGA. A helical membrane pass occupies residues 39 to 59; that stretch reads GGQPAGPGAAGEALAVLTSFG. The Lumenal portion of the chain corresponds to 60–62; it reads RRL. Residues 63–83 form a helical membrane-spanning segment; the sequence is LVLIPVYLAGAVGLSVGFVLF. At 84–1104 the chain is on the cytoplasmic side; it reads GLALYLGWRR…LMDNKDKGSS (1021 aa). A coiled-coil region spans residues 91 to 116; the sequence is WRRVRDEKERSLRAARQLLDDEEQLT. An SMP-LTD domain is found at 135–313; the sequence is DVEKAEWLNK…LPNRLLVPLV (179 aa). 4 consecutive C2 domains span residues 312-433, 460-580, 627-751, and 777-899; these read LVPD…DDWF, QVLQ…QLSS, SVDA…DEWL, and LEEV…TLSS. Position 324 is a phosphoserine; by CDK5 (Ser-324). Residues Lys-344, Asp-345, Asp-357, Asp-404, Asp-406, Asp-408, Asp-410, and Asp-411 each coordinate Ca(2+). The interval 617 to 641 is disordered; it reads VDSENPQRGSSVDAPPRPCHTTPDS. N6-acetyllysine is present on Lys-817. Ser-820 and Ser-941 each carry phosphoserine. A disordered region spans residues 924–950; it reads SHSYSHSSSSLSEEPELSGGPPHITSS. Residues 925 to 946 show a composition bias toward low complexity; the sequence is HSYSHSSSSLSEEPELSGGPPH. Thr-948 is modified (phosphothreonine). 2 positions are modified to phosphoserine: Ser-949 and Ser-963. The C2 5 domain maps to 971–1093; sequence PLGQVKLTLW…DLSQGVARWY (123 aa). Tyr-1009 is modified (phosphotyrosine). The tract at residues 1018–1025 is required for phosphatidylinositol 4,5-bisphosphate-dependent location at the cell membrane; it reads KNRGTKRR. Ser-1034 bears the Phosphoserine mark.

Belongs to the extended synaptotagmin family. As to quaternary structure, interacts with ESYT2 and ESYT3. Interacts with ADGRD1; inhibiting the G-protein-coupled receptor activity of ADGRD1. Interaction with ADGRD1 is abolished when cytosolic calcium increases, relieving ADGRD1 G-protein-coupled receptor activity. Interacts (phosphorylated form) with SLC2A4. Phosphorylated on Ser residues in insulin-treated adipocytes (in vitro); this promotes interaction with SLC2A4. As to expression, widely expressed.

It localises to the endoplasmic reticulum membrane. The protein localises to the cell membrane. In terms of biological role, binds calcium (via the C2 domains) and translocates to sites of contact between the endoplasmic reticulum and the cell membrane in response to increased cytosolic calcium levels. Helps tether the endoplasmic reticulum to the cell membrane and promotes the formation of appositions between the endoplasmic reticulum and the cell membrane. Acts as an inhibitor of ADGRD1 G-protein-coupled receptor activity in absence of cytosolic calcium. Binds glycerophospholipids in a barrel-like domain and may play a role in cellular lipid transport. This Homo sapiens (Human) protein is Extended synaptotagmin-1.